The chain runs to 345 residues: MTSITTIPLSTLRSSLPARPDAAAAPQRWRVADIEALYALPFMDLLFRAQQVHRANFDANQVQLSTLLSIKTGGCAEDCGYCPQSSHFETEVKASKLMALDEVMAAAQAAKDQGATRFCMGAAWSRPKERDMERVTEMVREVRGLGLETCMTLGMLEAEQAQALKDAGLDYYNHNLDSSPEFYGSIISTRTYQDRLDTLENVRGAGINVCCGGIVGMGESRAQRAGLVAQLANLEPYPESVPINNLVAVEGTPLADTPPLDPFEFVRTIAVARITMPRTMVRLSAGREQMDEALQALCFMAGANSIFYGDRLLTTSNPQADKDRQLFARLGLKVQGERPAATVQG.

The region spanning 60–287 (NQVQLSTLLS…RTMVRLSAGR (228 aa)) is the Radical SAM core domain. Residues cysteine 75, cysteine 79, and cysteine 82 each coordinate [4Fe-4S] cluster. 4 residues coordinate [2Fe-2S] cluster: cysteine 119, cysteine 150, cysteine 210, and arginine 282.

The protein belongs to the radical SAM superfamily. Biotin synthase family. As to quaternary structure, homodimer. [4Fe-4S] cluster is required as a cofactor. It depends on [2Fe-2S] cluster as a cofactor.

The catalysed reaction is (4R,5S)-dethiobiotin + (sulfur carrier)-SH + 2 reduced [2Fe-2S]-[ferredoxin] + 2 S-adenosyl-L-methionine = (sulfur carrier)-H + biotin + 2 5'-deoxyadenosine + 2 L-methionine + 2 oxidized [2Fe-2S]-[ferredoxin]. It functions in the pathway cofactor biosynthesis; biotin biosynthesis; biotin from 7,8-diaminononanoate: step 2/2. Functionally, catalyzes the conversion of dethiobiotin (DTB) to biotin by the insertion of a sulfur atom into dethiobiotin via a radical-based mechanism. This Polaromonas naphthalenivorans (strain CJ2) protein is Biotin synthase.